A 1172-amino-acid polypeptide reads, in one-letter code: Thrombospondin-2 (1172 aa).

The signal sequence occupies residues 1–18; the sequence is MLWALALLALGIGPRASA. The Laminin G-like domain occupies 19–215; sequence GDHVKDTSFD…LQNVHLVFAD (197 aa). Residues 19-232 are heparin-binding; it reads GDHVKDTSFD…KKGCQHSQGA (214 aa). Asn-151, Asn-316, and Asn-330 each carry an N-linked (GlcNAc...) asparagine glycan. Residues 318–375 enclose the VWFC domain; that stretch reads SACVQEGRIFAENETWVVDSCTTCTCKKFKTVCHQITCSPATCANPSFVEGECCPSCS. TSP type-1 domains follow at residues 381–431, 437–492, and 494–549; these read DEGW…GKCD, NGGW…DPCP, and DGRW…RSCP. Cystine bridges form between Cys-393–Cys-425, Cys-397–Cys-430, Cys-408–Cys-415, Cys-449–Cys-486, Cys-453–Cys-491, Cys-464–Cys-476, Cys-506–Cys-543, Cys-510–Cys-548, Cys-521–Cys-533, Cys-553–Cys-564, Cys-558–Cys-574, Cys-577–Cys-588, Cys-594–Cys-610, Cys-601–Cys-619, Cys-622–Cys-646, Cys-652–Cys-665, Cys-659–Cys-678, Cys-680–Cys-691, Cys-707–Cys-715, Cys-720–Cys-740, Cys-756–Cys-776, Cys-779–Cys-799, Cys-815–Cys-835, Cys-838–Cys-858, Cys-876–Cys-896, Cys-912–Cys-932, and Cys-948–Cys-1169. Residue Asn-457 is glycosylated (N-linked (GlcNAc...) asparagine). In terms of domain architecture, EGF-like 1 spans 549–589; the sequence is PIDGCLSNPCFPGAKCNSFPDGSWSCGSCPVGFLGNGTHCE. N-linked (GlcNAc...) asparagine glycosylation is present at Asn-584. Residues 648-692 form the EGF-like 2 domain; that stretch reads PENPCKDKTHSCHKNAECIYLGHFSDPMYKCECQIGYAGDGLICG. TSP type-3 repeat units follow at residues 693 to 728, 729 to 764, 765 to 787, 788 to 823, 824 to 846, 847 to 884, 885 to 920, and 921 to 956; these read EDSD…NSGQ, EDFD…NPRQ, LDYD…NPAQ, IDTD…NTDQ, RDTD…NPDQ, IDQD…NSNQ, ADHD…NPDQ, and EDSD…AITE. An N-linked (GlcNAc...) asparagine glycan is attached at Asn-710. The segment at 727–752 is disordered; sequence GQEDFDKDGIGDACDEDDDNDGVSDE. A compositionally biased stretch (acidic residues) spans 739-749; it reads ACDEDDDNDGV. A disordered region spans residues 846–938; that stretch reads QIDQDNDLVG…GDICKDDFDN (93 aa). Residues 847–866 show a composition bias toward acidic residues; sequence IDQDNDLVGDQCDNNEDIDD. The segment covering 870–884 has biased composition (polar residues); it reads QNNQDNCPYISNSNQ. A compositionally biased stretch (basic and acidic residues) spans 885-895; the sequence is ADHDNDGKGDA. Residues 896 to 905 are compositionally biased toward acidic residues; the sequence is CDSDDDNDGV. Positions 925–935 are enriched in basic and acidic residues; that stretch reads GDGRGDICKDD. The Cell attachment site signature appears at 928-930; sequence RGD. Residues 960–1172 enclose the TSP C-terminal domain; it reads RNFQMVPLDP…SDLKYECRDA (213 aa). An N-linked (GlcNAc...) asparagine glycan is attached at Asn-1069.

Belongs to the thrombospondin family. As to quaternary structure, homotrimer; disulfide-linked. Can bind to fibrinogen, fibronectin, laminin and type V collagen. Interacts (via the TSP type I repeats) with CD36; the interaction conveys an antiangiogenic effect. Interacts (via the TSP type I repeats) with HRG; the interaction blocks the antiangiogenic effect of THBS2 with CD36. Can bind to fibrinogen, fibronectin, laminin.

In terms of biological role, adhesive glycoprotein that mediates cell-to-cell and cell-to-matrix interactions. Ligand for CD36 mediating antiangiogenic properties. This is Thrombospondin-2 (Thbs2) from Mus musculus (Mouse).